A 117-amino-acid chain; its full sequence is Prefoldin subunit beta (117 aa).

The protein belongs to the prefoldin subunit beta family. Heterohexamer of two alpha and four beta subunits.

It localises to the cytoplasm. Its function is as follows. Molecular chaperone capable of stabilizing a range of proteins. Seems to fulfill an ATP-independent, HSP70-like function in archaeal de novo protein folding. This Pyrococcus abyssi (strain GE5 / Orsay) protein is Prefoldin subunit beta (pfdB).